Consider the following 1209-residue polypeptide: Nitric oxide synthase (1209 aa).

Residue Ser-103 coordinates (6R)-L-erythro-5,6,7,8-tetrahydrobiopterin. Cys-181 contacts heme b. The L-arginine site is built by Gln-244, Trp-353, Tyr-354, Glu-358, and Asn-363. (6R)-L-erythro-5,6,7,8-tetrahydrobiopterin-binding residues include Trp-444 and Phe-457. Tyr-472 serves as a coordination point for heme b. The calmodulin-binding stretch occupies residues 491-511 (VHRKFHFKQIARAVKFTSKLF). Residues 521-723 (ATILYATETG…QFRAWSSKIF (203 aa)) form the Flavodoxin-like domain. Position 527-531 (527-531 (TETGK)) interacts with FMN. The interval 603–622 (RGDGTSDLGSGTFKTPTPKS) is disordered. 669–700 (VFGLGSSAYPKFCHFGKTVDKILGDLGGERIL) is an FMN binding site. Residues 776–1021 (KQLITCKVKE…IRRAPSFHMP (246 aa)) enclose the FAD-binding FR-type domain. Residues 811–822 (YDPGDHVGVLAC) and 954–964 (LQPRFYSISSS) contribute to the FAD site. NADP(+) contacts are provided by residues 1028–1147 (LILV…QQKL) and 1128–1143 (NGHF…AEEV).

It belongs to the NOS family. Heme b is required as a cofactor. The cofactor is FAD. It depends on FMN as a cofactor. In terms of tissue distribution, constitutively expressed at a low level in the larval fat body, hemocyte, Malpighian tubule, midgut, silk gland and adult antenna.

It carries out the reaction 2 L-arginine + 3 NADPH + 4 O2 + H(+) = 2 L-citrulline + 2 nitric oxide + 3 NADP(+) + 4 H2O. With respect to regulation, expression is dependent on and stimulated by NADPH, calcium, BH4 and calmodulin. The activity is not dependent on FAD and is not stimulated by its presence. In terms of biological role, produces nitric oxide (NO) which is a messenger molecule with diverse functions throughout the body. Involved in the induction of immune gene expression. This Bombyx mori (Silk moth) protein is Nitric oxide synthase.